The following is a 158-amino-acid chain: NAD(P)H-quinone oxidoreductase subunit J, chloroplastic (158 aa).

Belongs to the complex I 30 kDa subunit family. NDH is composed of at least 16 different subunits, 5 of which are encoded in the nucleus.

Its subcellular location is the plastid. It is found in the chloroplast thylakoid membrane. It catalyses the reaction a plastoquinone + NADH + (n+1) H(+)(in) = a plastoquinol + NAD(+) + n H(+)(out). The catalysed reaction is a plastoquinone + NADPH + (n+1) H(+)(in) = a plastoquinol + NADP(+) + n H(+)(out). NDH shuttles electrons from NAD(P)H:plastoquinone, via FMN and iron-sulfur (Fe-S) centers, to quinones in the photosynthetic chain and possibly in a chloroplast respiratory chain. The immediate electron acceptor for the enzyme in this species is believed to be plastoquinone. Couples the redox reaction to proton translocation, and thus conserves the redox energy in a proton gradient. The sequence is that of NAD(P)H-quinone oxidoreductase subunit J, chloroplastic from Acorus calamus var. americanus (American sweet flag).